Reading from the N-terminus, the 341-residue chain is D-aspartate oxidase (341 aa).

Aspartate 36, arginine 37, threonine 43, serine 44, methionine 50, glycine 307, isoleucine 311, and serine 312 together coordinate FAD. Residues 339–341 (SKL) carry the Microbody targeting signal motif.

The protein belongs to the DAMOX/DASOX family. In terms of assembly, dimer or tetramer. Interacts with PEX5; the interaction is direct and required for localization of DDO to the peroxisome. Requires FAD as cofactor. As to expression, expressed in the small intestine (at protein level). Expressed in the ependymal cell layer of the telencephalic ventricles, hippocampus, thalamus, cerebellum, midbrain region, pons, olfactory bulbs, and cortex. Repressed in the testis. Expressed in the kidney, liver, stomach, pancreas, uterus, lactating breast, involuting mammary gland, brain, heart, lung, and skin. In terms of tissue distribution, expressed in kidney, liver, pancreas, and in the mammary gland regardless of lactation status.

The protein resides in the peroxisome matrix. Its subcellular location is the cytoplasm. The protein localises to the cytosol. The enzyme catalyses D-aspartate + O2 + H2O = oxaloacetate + H2O2 + NH4(+). It catalyses the reaction D-glutamate + O2 + H2O = H2O2 + 2-oxoglutarate + NH4(+). With respect to regulation, inhibited by the benzodiazepine olanzapine; chronic systemic administration of the benzodiazepine increases levels of D-aspartate and L-glutamate in the prefrontal cortex. Efficiently inhibited by 5-aminonicotinic acid (5-AN) and 1,4-Dihydropyrido[2,3-b]pyrazine-2,3-dione (DPPD). Inhibited by aminooxyacetic acid, thiolactomycin, anthranilic acid, malonate, meso-tartrate and L-tartrate. Benzoate has no effect on activity. Selectively catalyzes the oxidative deamination of acidic amino acids. Suppresses the level of D-aspartate in the brain, an amino acid that can act as an agonist for glutamate receptors. Protects the organism from the toxicity of D-amino acids. May also function in the intestine. Its function is as follows. Selectively catalyzes the oxidative deamination of acidic amino acids. In terms of biological role, does not exhibit D-aspartate oxidase activity. The chain is D-aspartate oxidase (Ddo) from Mus musculus (Mouse).